The chain runs to 303 residues: Phosphoglycerate mutase 3 (303 aa).

Residues 13–20 (RHGQSELN), 26–27 (CG), Arg-70, 120–123 (ERHY), Lys-131, and 147–148 (RR) contribute to the substrate site. His-14 acts as the Tele-phosphohistidine intermediate in catalysis. The active-site Proton donor/acceptor is the Glu-120. Positions 168–198 (NDQGSSTGYDFKEPNRHLKYGPEEKANERLP) are disordered. Basic and acidic residues predominate over residues 177-198 (DFKEPNRHLKYGPEEKANERLP). Residue 236–237 (GS) participates in substrate binding.

Belongs to the phosphoglycerate mutase family. BPG-dependent PGAM subfamily.

It catalyses the reaction (2R)-2-phosphoglycerate = (2R)-3-phosphoglycerate. It participates in carbohydrate degradation; glycolysis; pyruvate from D-glyceraldehyde 3-phosphate: step 3/5. Functionally, could be non-functional. This chain is Phosphoglycerate mutase 3 (GPM3), found in Saccharomyces cerevisiae (strain ATCC 204508 / S288c) (Baker's yeast).